The primary structure comprises 432 residues: Enolase (432 aa).

Gln167 is a binding site for (2R)-2-phosphoglycerate. The active-site Proton donor is the Glu209. Mg(2+) is bound by residues Asp246, Glu287, and Asp314. (2R)-2-phosphoglycerate-binding residues include Lys339, Arg368, Ser369, and Lys390. The Proton acceptor role is filled by Lys339.

This sequence belongs to the enolase family. The cofactor is Mg(2+).

It is found in the cytoplasm. The protein localises to the secreted. It localises to the cell surface. It carries out the reaction (2R)-2-phosphoglycerate = phosphoenolpyruvate + H2O. It participates in carbohydrate degradation; glycolysis; pyruvate from D-glyceraldehyde 3-phosphate: step 4/5. Catalyzes the reversible conversion of 2-phosphoglycerate (2-PG) into phosphoenolpyruvate (PEP). It is essential for the degradation of carbohydrates via glycolysis. This is Enolase from Prochlorococcus marinus (strain SARG / CCMP1375 / SS120).